Here is a 266-residue protein sequence, read N- to C-terminus: GFP-like fluorescent chromoprotein cFP484 (266 aa).

The segment at residues 104–106 (QYG) is a cross-link (2-iminomethyl-5-imidazolinone (Gln-Gly)). The residue at position 105 (Tyr105) is a 2,3-didehydrotyrosine.

This sequence belongs to the GFP family. Contains a chromophore consisting of modified amino acid residues. The chromophore is formed by autocatalytic backbone condensation between Xaa-N and Gly-(N+2), oxidation of Tyr-(N+1) to didehydrotyrosine, and formation of a double bond to the alpha-amino nitrogen of residue Xaa-N. Maturation of the chromophore requires nothing other than molecular oxygen. The precise stereochemistry of the tyrosine has not been determined. As to expression, tentacle and oral disk.

Functionally, pigment protein that is green in color. This is GFP-like fluorescent chromoprotein cFP484 from Clavularia sp. (Brown star polyp).